The chain runs to 468 residues: Two-component response regulator-like APRR9 (468 aa).

Residues 38-156 (RVLLVESDYS…ELKNLWQHVW (119 aa)) enclose the Response regulatory domain. Polar residues-rich tracts occupy residues 168 to 177 (HAQSLPASQH) and 194 to 203 (DQGSGAQAIN). Disordered regions lie at residues 168 to 203 (HAQSLPASQHNLEDTDETCEDSRYHSDQGSGAQAIN), 302 to 416 (VVAL…SRSQ), and 442 to 468 (RKKLAEQRPRVKGQFVRTVNSDASTKS). Residues 315–327 (TPTESHEKLRKVT) are compositionally biased toward basic and acidic residues. Over residues 328 to 364 (SDQGSATTSSNQENIGSSSVSFRNQVLQSTVTNQKQD) the composition is skewed to polar residues. 2 stretches are compositionally biased toward basic and acidic residues: residues 371-382 (SNREKAASKEVE) and 400-409 (EKPKEEESAK). Positions 417-459 (REAALMKFRLKRKDRCFDKKVRYQSRKKLAEQRPRVKGQFVRT) constitute a CCT domain. Residues 458 to 468 (RTVNSDASTKS) are compositionally biased toward polar residues.

This sequence belongs to the ARR-like family. In terms of processing, phosphorylated. Phosphorylation varies throughout the diurnal cycle.

It localises to the nucleus. Its function is as follows. Transcriptional repressor of CCA1 and LHY, and positive regulator of LWD1 and LWD2 expression. Controls photoperiodic flowering response and temperature compensation. Involved in the positive and negative feedback loops of the circadian clock. Expression of several members of the ARR-like family is controlled by circadian rhythm. Regulated at the transcriptional level by a corepressor complex consisting of ELF4, ELF3, and LUX. APRR9, APRR7, and APRR5 coordinately act on the upstream region of the target genes to repress their expression from noon until midnight. The particular coordinated sequential expression of APRR9, APRR7, APRR5, APRR3 and APPR1 result to circadian waves that may be at the basis of the endogenous circadian clock. The chain is Two-component response regulator-like APRR9 (APRR9) from Arabidopsis thaliana (Mouse-ear cress).